Consider the following 937-residue polypeptide: CAP-Gly domain-containing linker protein 1 homolog (937 aa).

In terms of domain architecture, CAP-Gly spans 39-81; the sequence is GPIHGKDGMFCGIELLEPNGKHDGTFQGVSYFIATPYHGIFAP. Disordered regions lie at residues 90–131 and 264–548; these read EELP…VMST and LPND…SRLQ. The segment covering 268 to 281 has biased composition (polar residues); that stretch reads LNANFSNKNSTTTF. A compositionally biased stretch (basic and acidic residues) spans 285–295; the sequence is ETPKVEIRENG. Over residues 296-309 the composition is skewed to polar residues; it reads NLDNSIETPPQQSP. Basic and acidic residues-rich tracts occupy residues 317 to 353, 383 to 396, 409 to 424, and 463 to 473; these read HESDSSSKKDDTKSDKSPTKKSQKMEEKPVVKKKEEP, IEAEKTKPKKEIKS, PQKENKEGGEMTETPR, and AKERVEKEKKI. Residues 492 to 501 show a composition bias toward low complexity; sequence SSIPSTSSAS. Coiled-coil stretches lie at residues 566–740 and 773–800; these read EDNE…VDEI and QQIEDLRRKQIHDEEEKEAMKRSFDLMQ. 2 disordered regions span residues 819–866 and 916–937; these read MESR…DSMN and PTIKSESSRIGNTSDSGIGLVM. Residues 832–844 are compositionally biased toward low complexity; it reads RSRSSASGSRPIS. Polar residues predominate over residues 845–858; the sequence is MATSNGGDQRLSTS.

This is CAP-Gly domain-containing linker protein 1 homolog from Caenorhabditis elegans.